Reading from the N-terminus, the 503-residue chain is ATP synthase subunit alpha (503 aa).

170-177 (GDRQTGKT) is a binding site for ATP.

This sequence belongs to the ATPase alpha/beta chains family. F-type ATPases have 2 components, CF(1) - the catalytic core - and CF(0) - the membrane proton channel. CF(1) has five subunits: alpha(3), beta(3), gamma(1), delta(1), epsilon(1). CF(0) has three main subunits: a(1), b(2) and c(9-12). The alpha and beta chains form an alternating ring which encloses part of the gamma chain. CF(1) is attached to CF(0) by a central stalk formed by the gamma and epsilon chains, while a peripheral stalk is formed by the delta and b chains.

It is found in the cell inner membrane. The catalysed reaction is ATP + H2O + 4 H(+)(in) = ADP + phosphate + 5 H(+)(out). Its function is as follows. Produces ATP from ADP in the presence of a proton gradient across the membrane. The alpha chain is a regulatory subunit. The protein is ATP synthase subunit alpha of Thermotoga maritima (strain ATCC 43589 / DSM 3109 / JCM 10099 / NBRC 100826 / MSB8).